The primary structure comprises 812 residues: Valine--tRNA ligase (812 aa).

The 'HIGH' region motif lies at 46 to 56; it reads PTVSGQLHIGH. The short motif at 536–540 is the 'KMSKS' region element; it reads KMSKS. An ATP-binding site is contributed by Lys539.

This sequence belongs to the class-I aminoacyl-tRNA synthetase family. ValS type 2 subfamily. In terms of assembly, monomer.

The protein resides in the cytoplasm. The enzyme catalyses tRNA(Val) + L-valine + ATP = L-valyl-tRNA(Val) + AMP + diphosphate. In terms of biological role, catalyzes the attachment of valine to tRNA(Val). As ValRS can inadvertently accommodate and process structurally similar amino acids such as threonine, to avoid such errors, it has a 'posttransfer' editing activity that hydrolyzes mischarged Thr-tRNA(Val) in a tRNA-dependent manner. This chain is Valine--tRNA ligase, found in Rickettsia rickettsii (strain Iowa).